The chain runs to 263 residues: Hydroxyethylthiazole kinase (263 aa).

Residue Met39 coordinates substrate. Positions 115 and 160 each coordinate ATP. Substrate is bound at residue Gly187.

This sequence belongs to the Thz kinase family. The cofactor is Mg(2+).

The enzyme catalyses 5-(2-hydroxyethyl)-4-methylthiazole + ATP = 4-methyl-5-(2-phosphooxyethyl)-thiazole + ADP + H(+). It functions in the pathway cofactor biosynthesis; thiamine diphosphate biosynthesis; 4-methyl-5-(2-phosphoethyl)-thiazole from 5-(2-hydroxyethyl)-4-methylthiazole: step 1/1. Catalyzes the phosphorylation of the hydroxyl group of 4-methyl-5-beta-hydroxyethylthiazole (THZ). The polypeptide is Hydroxyethylthiazole kinase (Staphylococcus aureus (strain bovine RF122 / ET3-1)).